The chain runs to 387 residues: Succinate--CoA ligase [ADP-forming] subunit beta (387 aa).

The 236-residue stretch at 9–244 (KALLQRYGVN…WSQDDAKEAE (236 aa)) folds into the ATP-grasp domain. Residues Lys-46, 53–55 (GRG), Glu-99, Leu-102, and Glu-107 each bind ATP. Residues Asn-199 and Asp-213 each contribute to the Mg(2+) site. Residues Asn-264 and 321–323 (GIM) contribute to the substrate site.

The protein belongs to the succinate/malate CoA ligase beta subunit family. In terms of assembly, heterotetramer of two alpha and two beta subunits. Mg(2+) is required as a cofactor.

It catalyses the reaction succinate + ATP + CoA = succinyl-CoA + ADP + phosphate. The catalysed reaction is GTP + succinate + CoA = succinyl-CoA + GDP + phosphate. The protein operates within carbohydrate metabolism; tricarboxylic acid cycle; succinate from succinyl-CoA (ligase route): step 1/1. Succinyl-CoA synthetase functions in the citric acid cycle (TCA), coupling the hydrolysis of succinyl-CoA to the synthesis of either ATP or GTP and thus represents the only step of substrate-level phosphorylation in the TCA. The beta subunit provides nucleotide specificity of the enzyme and binds the substrate succinate, while the binding sites for coenzyme A and phosphate are found in the alpha subunit. The chain is Succinate--CoA ligase [ADP-forming] subunit beta from Methylobacillus flagellatus (strain ATCC 51484 / DSM 6875 / VKM B-1610 / KT).